We begin with the raw amino-acid sequence, 684 residues long: Collagen alpha-3(IX) chain (684 aa).

The first 25 residues, 1–25 (MAGPRACAPLLLLLLLGELLAAAGA), serve as a signal peptide directing secretion. Disordered regions lie at residues 26 to 521 (QRVG…KEAS) and 548 to 665 (LAPG…CDTS). Residues 29–519 (GLPGPPGPPG…TGKPGVPGKE (491 aa)) are triple-helical region 3 (COL3). Composition is skewed to pro residues over residues 31–42 (PGPPGPPGPPGK) and 55–64 (PGLPGPPGPK). Low complexity predominate over residues 66–82 (APGKPGKPGEAGLPGLP). The span at 130–139 (GPPGGIGLRG) shows a compositional bias: gly residues. 2 stretches are compositionally biased toward pro residues: residues 140 to 161 (PPGPSGLPGLPGPPGPPGPPGH) and 177 to 188 (ICPPGPPGPPGM). Over residues 200–212 (EQGEVGKDGEKGD) the composition is skewed to basic and acidic residues. A compositionally biased stretch (low complexity) spans 221–237 (LPGSVGLQGPRGLRGLP). 2 stretches are compositionally biased toward basic and acidic residues: residues 264-282 (AGDRGERGPEGFRGPKGDL) and 344-356 (SKGEKGERGRAGE). Positions 423-425 (RGD) match the Cell attachment site motif. A glycan (N-linked (GlcNAc...) asparagine) is linked at Asn-483. The span at 498 to 507 (LGLQGVPGVP) shows a compositional bias: low complexity. The segment at 520–550 (ASEQRIRELCGGMISEQIAQLAAHLRKPLAP) is nonhelical region 3 (NC3). The interval 551-630 (GSIGRPGPAG…QGPQGVPGTS (80 aa)) is triple-helical region 2 (COL2). Pro residues predominate over residues 558-568 (PAGPPGPPGPP). A compositionally biased stretch (low complexity) spans 570–586 (SIGHPGARGPPGYRGPT). Residues 601-603 (RGD) carry the Cell attachment site motif. The span at 617 to 628 (DQGPQGPQGVPG) shows a compositional bias: low complexity. Residues 631-632 (KD) form a nonhelical region 2 (NC2) region. Residues 633-661 (GQDGAPGEPGPPGDPGLPGAIGAQGTPGI) are triple-helical region 1 (COL1). The interval 662–684 (CDTSACQGAVLGGVGEKSGSRSS) is nonhelical region 1 (NC1).

It belongs to the fibril-associated collagens with interrupted helices (FACIT) family. As to quaternary structure, heterotrimer of an alpha 1(IX), an alpha 2(IX) and an alpha 3(IX) chain. In terms of processing, covalently linked to the telopeptides of type II collagen by lysine-derived cross-links. Post-translationally, prolines at the third position of the tripeptide repeating unit (G-X-Y) are hydroxylated in some or all of the chains.

The protein localises to the secreted. Its subcellular location is the extracellular space. The protein resides in the extracellular matrix. In terms of biological role, structural component of hyaline cartilage and vitreous of the eye. This Homo sapiens (Human) protein is Collagen alpha-3(IX) chain (COL9A3).